The sequence spans 143 residues: Large ribosomal subunit protein uL11 (143 aa).

The protein belongs to the universal ribosomal protein uL11 family. In terms of assembly, part of the ribosomal stalk of the 50S ribosomal subunit. Interacts with L10 and the large rRNA to form the base of the stalk. L10 forms an elongated spine to which L12 dimers bind in a sequential fashion forming a multimeric L10(L12)X complex. In terms of processing, one or more lysine residues are methylated.

In terms of biological role, forms part of the ribosomal stalk which helps the ribosome interact with GTP-bound translation factors. The polypeptide is Large ribosomal subunit protein uL11 (Psychrobacter cryohalolentis (strain ATCC BAA-1226 / DSM 17306 / VKM B-2378 / K5)).